The chain runs to 286 residues: ATP synthase gamma chain (286 aa).

This sequence belongs to the ATPase gamma chain family. F-type ATPases have 2 components, CF(1) - the catalytic core - and CF(0) - the membrane proton channel. CF(1) has five subunits: alpha(3), beta(3), gamma(1), delta(1), epsilon(1). CF(0) has three main subunits: a, b and c.

It localises to the cell inner membrane. Its function is as follows. Produces ATP from ADP in the presence of a proton gradient across the membrane. The gamma chain is believed to be important in regulating ATPase activity and the flow of protons through the CF(0) complex. This is ATP synthase gamma chain from Shewanella woodyi (strain ATCC 51908 / MS32).